Consider the following 402-residue polypeptide: Plasminogen activator inhibitor 1 (402 aa).

The first 23 residues, 1–23, serve as a signal peptide directing secretion; sequence MRMSPVFACLALGLALIFGEGSA. N-linked (GlcNAc...) asparagine glycans are attached at residues Asn-232, Asn-288, and Asn-352.

Belongs to the serpin family. Forms a heterodimer with TMPRSS7. Interacts with VTN. Binds LRP1B; binding is followed by internalization and degradation. Interacts with PPP1CB. In complex with PLAU/uPA, interacts with PLAUR/uPAR. Interacts with SORL1 and LRP1, either alone or in complex with PLAU; these interactions are abolished in the presence of LRPAP1/RAP. The ternary complex composed of PLAUR-PLAU-PAI1 also interacts with SORL1. Interacts with PLAT/tPA. Also interacts with SORL1, when complexed to PLAT/tPA. As to expression, vascular endothelial cells may be the primary site of synthesis of plasma PAI1.

It localises to the secreted. In terms of biological role, serine protease inhibitor. Inhibits TMPRSS7. Is a primary inhibitor of tissue-type plasminogen activator (PLAT) and urokinase-type plasminogen activator (PLAU). As PLAT inhibitor, it is required for fibrinolysis down-regulation and is responsible for the controlled degradation of blood clots. As PLAU inhibitor, it is involved in the regulation of cell adhesion and spreading. Acts as a regulator of cell migration, independently of its role as protease inhibitor. It is required for stimulation of keratinocyte migration during cutaneous injury repair. It is involved in cellular and replicative senescence. Plays a role in alveolar type 2 cells senescence in the lung. Is involved in the regulation of cementogenic differentiation of periodontal ligament stem cells, and regulates odontoblast differentiation and dentin formation during odontogenesis. The polypeptide is Plasminogen activator inhibitor 1 (SERPINE1) (Bos taurus (Bovine)).